A 373-amino-acid chain; its full sequence is Molybdenum import ATP-binding protein ModC (373 aa).

Residues 4–240 form the ABC transporter domain; that stretch reads LTPPTIRAAF…PKLPLAIARD (237 aa). 38 to 45 serves as a coordination point for ATP; that stretch reads GPSGCGKS. Positions 299-369 constitute a Mop domain; sequence ASSILNAIAA…IKGVALAPGR (71 aa).

Belongs to the ABC transporter superfamily. Molybdate importer (TC 3.A.1.8) family. The complex is composed of two ATP-binding proteins (ModC), two transmembrane proteins (ModB) and a solute-binding protein (ModA).

It localises to the cell inner membrane. The enzyme catalyses molybdate(out) + ATP + H2O = molybdate(in) + ADP + phosphate + H(+). Functionally, part of the ABC transporter complex ModABC involved in molybdenum import. Responsible for energy coupling to the transport system. This Rhodopseudomonas palustris (strain ATCC BAA-98 / CGA009) protein is Molybdenum import ATP-binding protein ModC.